A 312-amino-acid chain; its full sequence is Ribonuclease Z (312 aa).

Residues His62, His64, Asp66, His67, His144, Asp215, and His273 each coordinate Zn(2+). Asp66 functions as the Proton acceptor in the catalytic mechanism.

Belongs to the RNase Z family. In terms of assembly, homodimer. It depends on Zn(2+) as a cofactor.

It catalyses the reaction Endonucleolytic cleavage of RNA, removing extra 3' nucleotides from tRNA precursor, generating 3' termini of tRNAs. A 3'-hydroxy group is left at the tRNA terminus and a 5'-phosphoryl group is left at the trailer molecule.. In terms of biological role, zinc phosphodiesterase, which displays some tRNA 3'-processing endonuclease activity. Probably involved in tRNA maturation, by removing a 3'-trailer from precursor tRNA. The polypeptide is Ribonuclease Z (Prochlorococcus marinus (strain AS9601)).